The following is a 138-amino-acid chain: Small ribosomal subunit protein uS11c (138 aa).

The segment at 1 to 22 is disordered; that stretch reads MAKLLPRIGSRKNGRISSRKNA. Over residues 9 to 22 the composition is skewed to basic residues; the sequence is GSRKNGRISSRKNA.

This sequence belongs to the universal ribosomal protein uS11 family. Part of the 30S ribosomal subunit.

It is found in the plastid. Its subcellular location is the chloroplast. The polypeptide is Small ribosomal subunit protein uS11c (Populus alba (White poplar)).